A 544-amino-acid polypeptide reads, in one-letter code: Chaperonin GroEL (544 aa).

ATP contacts are provided by residues 30-33 (TLGP), K51, 87-91 (DGTTT), G415, 478-480 (DVA), and D494. Residues 524–544 (PEKEKKPATPAGAGGMGDMEY) are disordered. Residues 535–544 (GAGGMGDMEY) are compositionally biased toward gly residues.

Belongs to the chaperonin (HSP60) family. In terms of assembly, forms a cylinder of 14 subunits composed of two heptameric rings stacked back-to-back. Interacts with the co-chaperonin GroES.

It is found in the cytoplasm. The enzyme catalyses ATP + H2O + a folded polypeptide = ADP + phosphate + an unfolded polypeptide.. Together with its co-chaperonin GroES, plays an essential role in assisting protein folding. The GroEL-GroES system forms a nano-cage that allows encapsulation of the non-native substrate proteins and provides a physical environment optimized to promote and accelerate protein folding. This is Chaperonin GroEL from Methylacidiphilum infernorum (isolate V4) (Methylokorus infernorum (strain V4)).